Here is a 969-residue protein sequence, read N- to C-terminus: Manganese resistance protein MNR2 (969 aa).

Residues 1–11 (MSTDNSQKDEG) are compositionally biased toward basic and acidic residues. Disordered regions lie at residues 1–49 (MSTD…SRRP), 96–153 (GAFI…DLSP), 167–186 (HKSF…NANN), and 199–256 (VNNN…NNSS). At 1 to 912 (MSTDNSQKDE…DMNDVLGKIT (912 aa)) the chain is on the cytoplasmic side. Positions 13 to 23 (PLLSPYSSSPQ) are enriched in low complexity. The segment covering 24–36 (LRKKKRNQKRRKD) has biased composition (basic residues). Over residues 37 to 48 (KFVGHLKSDSRR) the composition is skewed to basic and acidic residues. Phosphoserine is present on Ser114. The segment covering 141–152 (SDQNRSLVSDLS) has biased composition (polar residues). Ser175 carries the phosphoserine modification. At Thr177 the chain carries Phosphothreonine. The residue at position 182 (Ser182) is a Phosphoserine. 2 stretches are compositionally biased toward low complexity: residues 225–234 (NKNSKSTSSD) and 244–256 (SRPS…NNSS). Ser383 carries the phosphoserine modification. Disordered regions lie at residues 559–662 (VRRR…KPRE) and 746–769 (QSDD…DEDA). The span at 565 to 578 (EKQESATLDHESIS) shows a compositional bias: basic and acidic residues. Thr571 is modified (phosphothreonine). Phosphoserine is present on residues Ser576 and Ser582. Low complexity-rich tracts occupy residues 590–607 (SNES…ASRS) and 622–632 (ANRTTNTSSSS). Acidic residues predominate over residues 749–769 (DSSDSDSSDSDSDSGASDEDA). Residues 913–933 (ILGTIVLPMNVITGLWGMNVI) form a helical membrane-spanning segment. Residues 934–941 (VPGQYRDS) are Extracellular-facing. A helical membrane pass occupies residues 942-962 (LTWFIGIVLFMCMLACSAYMY). At 963–969 (TKRRFGF) the chain is on the cytoplasmic side.

This sequence belongs to the CorA metal ion transporter (MIT) (TC 1.A.35) family.

The protein localises to the membrane. This is Manganese resistance protein MNR2 (MNR2) from Saccharomyces cerevisiae (strain ATCC 204508 / S288c) (Baker's yeast).